A 412-amino-acid chain; its full sequence is Cytochrome P450-SOY (412 aa).

Residues 1–25 (MTESTTDPARQNLDPTSPAPATSFP) are compositionally biased toward polar residues. The interval 1-38 (MTESTTDPARQNLDPTSPAPATSFPQDRGCPYHPPAGY) is disordered. Residue Cys361 participates in heme binding.

Belongs to the cytochrome P450 family. Requires heme as cofactor.

The protein localises to the cytoplasm. The polypeptide is Cytochrome P450-SOY (cyp105D1) (Streptomyces griseus).